A 404-amino-acid chain; its full sequence is Argininosuccinate synthase (404 aa).

ATP-binding positions include 11–19 (AYSGGLDTS) and Ala38. The L-citrulline site is built by Tyr91 and Ser96. ATP is bound at residue Gly121. 3 residues coordinate L-aspartate: Thr123, Asn127, and Asp128. L-citrulline is bound at residue Asn127. The L-citrulline site is built by Arg131, Ser181, Ser190, Glu266, and Tyr278.

Belongs to the argininosuccinate synthase family. Type 1 subfamily. In terms of assembly, homotetramer.

It localises to the cytoplasm. The catalysed reaction is L-citrulline + L-aspartate + ATP = 2-(N(omega)-L-arginino)succinate + AMP + diphosphate + H(+). Its pathway is amino-acid biosynthesis; L-arginine biosynthesis; L-arginine from L-ornithine and carbamoyl phosphate: step 2/3. This chain is Argininosuccinate synthase, found in Sulfurimonas denitrificans (strain ATCC 33889 / DSM 1251) (Thiomicrospira denitrificans (strain ATCC 33889 / DSM 1251)).